Consider the following 401-residue polypeptide: Imidazolonepropionase (401 aa).

His66 and His68 together coordinate Fe(3+). Zn(2+) is bound by residues His66 and His68. 4-imidazolone-5-propanoate contacts are provided by Arg75, Tyr138, and His171. Tyr138 serves as a coordination point for N-formimidoyl-L-glutamate. His236 contacts Fe(3+). His236 lines the Zn(2+) pocket. Gln239 lines the 4-imidazolone-5-propanoate pocket. Asp311 contacts Fe(3+). Asp311 is a Zn(2+) binding site. Asn313 and Gly315 together coordinate N-formimidoyl-L-glutamate. Thr316 lines the 4-imidazolone-5-propanoate pocket.

Belongs to the metallo-dependent hydrolases superfamily. HutI family. The cofactor is Zn(2+). Fe(3+) serves as cofactor.

It localises to the cytoplasm. It carries out the reaction 4-imidazolone-5-propanoate + H2O = N-formimidoyl-L-glutamate. Its pathway is amino-acid degradation; L-histidine degradation into L-glutamate; N-formimidoyl-L-glutamate from L-histidine: step 3/3. Its function is as follows. Catalyzes the hydrolytic cleavage of the carbon-nitrogen bond in imidazolone-5-propanoate to yield N-formimidoyl-L-glutamate. It is the third step in the universal histidine degradation pathway. This is Imidazolonepropionase from Pseudomonas putida (strain ATCC 47054 / DSM 6125 / CFBP 8728 / NCIMB 11950 / KT2440).